Consider the following 379-residue polypeptide: Lipid-A-disaccharide synthase (379 aa).

The protein belongs to the LpxB family.

It catalyses the reaction a lipid X + a UDP-2-N,3-O-bis[(3R)-3-hydroxyacyl]-alpha-D-glucosamine = a lipid A disaccharide + UDP + H(+). It participates in bacterial outer membrane biogenesis; LPS lipid A biosynthesis. Functionally, condensation of UDP-2,3-diacylglucosamine and 2,3-diacylglucosamine-1-phosphate to form lipid A disaccharide, a precursor of lipid A, a phosphorylated glycolipid that anchors the lipopolysaccharide to the outer membrane of the cell. This Vibrio parahaemolyticus serotype O3:K6 (strain RIMD 2210633) protein is Lipid-A-disaccharide synthase.